Reading from the N-terminus, the 221-residue chain is MKTVTSQKMRELETAAVKEFGIDEDVLMEHAGRSAAEEILNCFLSENKEKKVIIVCGHGGNGGDGLVCGRYLMERGVDVYCYIIPPFQGSYKGLVLKNLKRAFFSHLSVKEIYQNLSDLKNSVADAYIVIDALLGIGFKGEVKKNYKETIEVLNSSPSIKIAFDIPSGLNADSGQNEGAVFKADYTYAMGFAKQGCLKAKDICGEIKVLNIGLPKELLSKV.

Residues 9–219 (MRELETAAVK…NIGLPKELLS (211 aa)) form the YjeF N-terminal domain. Position 60–64 (60–64 (GNGGD)) interacts with (6S)-NADPHX. The K(+) site is built by asparagine 61 and aspartate 131. (6S)-NADPHX-binding positions include 135 to 141 (GIGFKGE), tyrosine 146, and aspartate 164. A K(+)-binding site is contributed by serine 167.

Belongs to the NnrE/AIBP family. Requires K(+) as cofactor.

The enzyme catalyses (6R)-NADHX = (6S)-NADHX. It carries out the reaction (6R)-NADPHX = (6S)-NADPHX. Catalyzes the epimerization of the S- and R-forms of NAD(P)HX, a damaged form of NAD(P)H that is a result of enzymatic or heat-dependent hydration. This is a prerequisite for the S-specific NAD(P)H-hydrate dehydratase to allow the repair of both epimers of NAD(P)HX. This chain is NAD(P)H-hydrate epimerase, found in Elusimicrobium minutum (strain Pei191).